A 391-amino-acid chain; its full sequence is Phosphoglycerate kinase (391 aa).

Substrate contacts are provided by residues 19–21 (DYN), Arg35, 58–61 (HMGR), Arg117, and Arg150. ATP contacts are provided by residues Lys201, Glu323, and 349 to 352 (GGDT).

Belongs to the phosphoglycerate kinase family. Monomer.

It localises to the cytoplasm. The catalysed reaction is (2R)-3-phosphoglycerate + ATP = (2R)-3-phospho-glyceroyl phosphate + ADP. It functions in the pathway carbohydrate degradation; glycolysis; pyruvate from D-glyceraldehyde 3-phosphate: step 2/5. This chain is Phosphoglycerate kinase, found in Desulforapulum autotrophicum (strain ATCC 43914 / DSM 3382 / VKM B-1955 / HRM2) (Desulfobacterium autotrophicum).